Here is a 253-residue protein sequence, read N- to C-terminus: Zinc import ATP-binding protein ZnuC (253 aa).

One can recognise an ABC transporter domain in the interval 6–227; the sequence is VTLNKISVTF…FGNRGAEQLA (222 aa). 38 to 45 is an ATP binding site; the sequence is GPNGAGKS.

Belongs to the ABC transporter superfamily. Zinc importer (TC 3.A.1.15.5) family. As to quaternary structure, the complex is composed of two ATP-binding proteins (ZnuC), two transmembrane proteins (ZnuB) and a solute-binding protein (ZnuA).

Its subcellular location is the cell inner membrane. It catalyses the reaction Zn(2+)(out) + ATP(in) + H2O(in) = Zn(2+)(in) + ADP(in) + phosphate(in) + H(+)(in). In terms of biological role, part of the ABC transporter complex ZnuABC involved in zinc import. Responsible for energy coupling to the transport system. The protein is Zinc import ATP-binding protein ZnuC of Yersinia pseudotuberculosis serotype I (strain IP32953).